We begin with the raw amino-acid sequence, 304 residues long: Protoheme IX farnesyltransferase 1 (304 aa).

8 helical membrane passes run 24–44 (VVVLMLITSLIGMLLATKAPL), 47–67 (FVPWQVLIFGNLGIGLCAGAA), 99–119 (MALGFALLLALAGMAVLLAFT), 122–142 (LTAWLTLASLLGYAALYTGFL), 150–170 (IVIGGLAGAAPPLLGWVAITG), 176–196 (PLLLVLIIFAWTPPHFWALCI), 228–248 (LVLFAVSLMPFVIHMSGLVYL), and 280–300 (YSIVYLFLLFMALLVDHYLPL).

Belongs to the UbiA prenyltransferase family. Protoheme IX farnesyltransferase subfamily.

It is found in the cell inner membrane. The enzyme catalyses heme b + (2E,6E)-farnesyl diphosphate + H2O = Fe(II)-heme o + diphosphate. The protein operates within porphyrin-containing compound metabolism; heme O biosynthesis; heme O from protoheme: step 1/1. Functionally, converts heme B (protoheme IX) to heme O by substitution of the vinyl group on carbon 2 of heme B porphyrin ring with a hydroxyethyl farnesyl side group. The protein is Protoheme IX farnesyltransferase 1 of Pseudomonas aeruginosa (strain UCBPP-PA14).